The chain runs to 828 residues: Periplasmic nitrate reductase (828 aa).

Positions 1–32 (MNLSRRDFMKTNAAVAAAAVAGLAIPVKNVEA) form a signal peptide, tat-type signal. Residues 38 to 94 (IKWDKAPCRFCGTGCSVLVGTQNGRVVASQGDPDADVNRGLNCIKGYFLPKIMYGKD) enclose the 4Fe-4S Mo/W bis-MGD-type domain. [4Fe-4S] cluster contacts are provided by Cys-45, Cys-48, Cys-52, and Cys-80. Residues Lys-82, Gln-149, Asn-174, Cys-178, 211–218 (WGSNMAEM), 242–246 (STFEH), 261–263 (QSD), Met-372, Gln-376, Asn-482, 508–509 (SD), Lys-531, Asp-558, and 718–727 (TGRVLEHWHT) each bind Mo-bis(molybdopterin guanine dinucleotide). Phe-794 contacts substrate. Mo-bis(molybdopterin guanine dinucleotide) contacts are provided by Asn-802 and Lys-819.

Belongs to the prokaryotic molybdopterin-containing oxidoreductase family. NasA/NapA/NarB subfamily. Component of the periplasmic nitrate reductase NapAB complex composed of NapA and NapB. It depends on [4Fe-4S] cluster as a cofactor. The cofactor is Mo-bis(molybdopterin guanine dinucleotide). Predicted to be exported by the Tat system. The position of the signal peptide cleavage has not been experimentally proven.

It is found in the periplasm. It catalyses the reaction 2 Fe(II)-[cytochrome] + nitrate + 2 H(+) = 2 Fe(III)-[cytochrome] + nitrite + H2O. Functionally, catalytic subunit of the periplasmic nitrate reductase complex NapAB. Receives electrons from NapB and catalyzes the reduction of nitrate to nitrite. The protein is Periplasmic nitrate reductase of Pasteurella multocida (strain Pm70).